The following is a 218-amino-acid chain: Glutathione S-transferase class-mu 26 kDa isozyme 7 (218 aa).

Residues 2 to 83 form the GST N-terminal domain; it reads PAKLGYWKIR…YIADKHGMLG (82 aa). Glutathione is bound by residues 7 to 8, 41 to 45, 54 to 55, and 67 to 68; these read YW, WLGDK, NL, and QS. In terms of domain architecture, GST C-terminal spans 85-203; that stretch reads TPEERARISM…KSERFIKWPL (119 aa). Residue Tyr111 participates in substrate binding.

It belongs to the GST superfamily. Mu family. As to quaternary structure, homodimer.

It catalyses the reaction RX + glutathione = an S-substituted glutathione + a halide anion + H(+). Conjugation of reduced glutathione to a wide number of exogenous and endogenous hydrophobic electrophiles. In terms of biological role, GST isoenzymes appear to play a central role in the parasite detoxification system. Other functions are also suspected including a role in increasing the solubility of haematin in the parasite gut. The chain is Glutathione S-transferase class-mu 26 kDa isozyme 7 from Fasciola hepatica (Liver fluke).